Reading from the N-terminus, the 507-residue chain is ATP synthase subunit alpha, chloroplastic (507 aa).

170–177 (GDRQTGKT) contacts ATP.

It belongs to the ATPase alpha/beta chains family. As to quaternary structure, F-type ATPases have 2 components, CF(1) - the catalytic core - and CF(0) - the membrane proton channel. CF(1) has five subunits: alpha(3), beta(3), gamma(1), delta(1), epsilon(1). CF(0) has four main subunits: a, b, b' and c.

The protein localises to the plastid. Its subcellular location is the chloroplast thylakoid membrane. The catalysed reaction is ATP + H2O + 4 H(+)(in) = ADP + phosphate + 5 H(+)(out). Produces ATP from ADP in the presence of a proton gradient across the membrane. The alpha chain is a regulatory subunit. The chain is ATP synthase subunit alpha, chloroplastic from Buxus microphylla (Littleleaf boxwood).